A 1138-amino-acid polypeptide reads, in one-letter code: Pesticidal crystal protein Cry7Aa (1138 aa).

This sequence belongs to the delta endotoxin family.

Its function is as follows. Promotes colloidosmotic lysis by binding to the midgut epithelial cells of Coleoptera. This protein is not toxic in its natural form. It is highly toxic to Colorado potato beetle larvae after an in vitro solubilization and trypsin activation step. The sequence is that of Pesticidal crystal protein Cry7Aa (cry7Aa) from Bacillus thuringiensis.